A 141-amino-acid polypeptide reads, in one-letter code: Small ribosomal subunit protein uS11 (141 aa).

Belongs to the universal ribosomal protein uS11 family. In terms of assembly, part of the 30S ribosomal subunit.

Functionally, located on the platform of the 30S subunit. The polypeptide is Small ribosomal subunit protein uS11 (Pyrobaculum calidifontis (strain DSM 21063 / JCM 11548 / VA1)).